Consider the following 475-residue polypeptide: Ataxin-10 (475 aa).

At Arg10 the chain carries Omega-N-methylarginine. Phosphoserine is present on residues Ser12 and Ser77. Residue Thr82 is modified to Phosphothreonine. Phosphoserine is present on Ser430.

This sequence belongs to the ataxin-10 family. Homooligomer. Interacts with GNB2. Interacts with IQCB1. Interacts with OGT. In terms of processing, polyubiquitinated. Phosphorylation at Ser-12 by AURKB promotes the association of ATXN10 with PLK1. Phosphorylation at Ser-77 and Thr-82 by PLK1 may play a role in the regulation of cytokinesis and may stimulate the proteasome-mediated degradation of ATXN10. In terms of tissue distribution, ubiquitous distribution. Markedly increased expression in testis, adrenals, and brain.

It is found in the cytoplasm. Its subcellular location is the perinuclear region. It localises to the midbody. The protein localises to the cytoskeleton. The protein resides in the cilium basal body. It is found in the microtubule organizing center. Its subcellular location is the centrosome. It localises to the centriole. Its function is as follows. May play a role in the regulation of cytokinesis. May play a role in signaling by stimulating protein glycosylation. Induces neuritogenesis by activating the Ras-MAP kinase pathway and is necessary for the survival of cerebellar neurons. Does not appear to play a major role in ciliogenesis. The polypeptide is Ataxin-10 (Atxn10) (Rattus norvegicus (Rat)).